The sequence spans 118 residues: T cell receptor gamma variable 3 (118 aa).

Residues 1 to 17 (MRWALLVLLAFLSPASQ) form the signal peptide. The Ig-like domain maps to 18–118 (KSSNLEGRTK…GVYYCATWDR (101 aa)). A disulfide bond links C41 and C113. N106 carries N-linked (GlcNAc...) asparagine glycosylation.

As to quaternary structure, gamma-delta TR is a heterodimer composed of a gamma and delta chain; disulfide-linked. The gamma-delta TR is associated with the transmembrane signaling CD3 coreceptor proteins following the stoichiometry: a single gamma-delta TR heterodimer associates with one CD3D-CD3E heterodimer, one CD3G-CD3E heterodimer and one CD247 homodimer forming a stable octameric structure. Upon activation, gamma-delta TR complex associates with FCER1G to initiate intracellular signaling.

The protein localises to the cell membrane. Its function is as follows. V region of the variable domain of T cell receptor (TR) gamma chain that participates in the antigen recognition. Gamma-delta TRs recognize a variety of self and foreign non-peptide antigens frequently expressed at the epithelial boundaries between the host and external environment, including endogenous lipids presented by MH-like protein CD1D and phosphoantigens presented by butyrophilin-like molecule BTN3A1. Upon antigen recognition induces rapid, innate-like immune responses involved in pathogen clearance and tissue repair. Binding of gamma-delta TR complex to antigen triggers phosphorylation of immunoreceptor tyrosine-based activation motifs (ITAMs) in the CD3 chains by the LCK and FYN kinases, allowing the recruitment, phosphorylation, and activation of ZAP70 that facilitates phosphorylation of the scaffolding proteins LCP2 and LAT. This lead to the formation of a supramolecular signalosome that recruits the phospholipase PLCG1, resulting in calcium mobilization and ERK activation, ultimately leading to T cell expansion and differentiation into effector cells. Gamma-delta TRs are produced through somatic rearrangement of a limited repertoire of variable (V), diversity (D), and joining (J) genes. The potential diversity of gamma-delta TRs is conferred by the unique ability to rearrange (D) genes in tandem and to utilize all three reading frames. The combinatorial diversity is considerably increased by the sequence exonuclease trimming and random nucleotide (N) region additions which occur during the V-(D)-J rearrangements. In Homo sapiens (Human), this protein is T cell receptor gamma variable 3.